Reading from the N-terminus, the 109-residue chain is Small ribosomal subunit protein bS6 (109 aa).

Belongs to the bacterial ribosomal protein bS6 family.

In terms of biological role, binds together with bS18 to 16S ribosomal RNA. The sequence is that of Small ribosomal subunit protein bS6 from Dehalococcoides mccartyi (strain CBDB1).